We begin with the raw amino-acid sequence, 653 residues long: Acetyl-coenzyme A synthetase (653 aa).

CoA is bound by residues 196–199 and Thr-315; that span reads RGGK. ATP contacts are provided by residues 391–393, 415–420, Asp-506, and Arg-521; these read GEP and DTWWQT. Ser-529 contacts CoA. Arg-532 contributes to the ATP binding site. Mg(2+) is bound by residues Val-543 and Val-548. Lys-618 carries the post-translational modification N6-acetyllysine.

The protein belongs to the ATP-dependent AMP-binding enzyme family. It depends on Mg(2+) as a cofactor. Acetylated. Deacetylation by the SIR2-homolog deacetylase activates the enzyme.

The enzyme catalyses acetate + ATP + CoA = acetyl-CoA + AMP + diphosphate. Its function is as follows. Catalyzes the conversion of acetate into acetyl-CoA (AcCoA), an essential intermediate at the junction of anabolic and catabolic pathways. AcsA undergoes a two-step reaction. In the first half reaction, AcsA combines acetate with ATP to form acetyl-adenylate (AcAMP) intermediate. In the second half reaction, it can then transfer the acetyl group from AcAMP to the sulfhydryl group of CoA, forming the product AcCoA. The polypeptide is Acetyl-coenzyme A synthetase (Laribacter hongkongensis (strain HLHK9)).